We begin with the raw amino-acid sequence, 313 residues long: Methionyl-tRNA formyltransferase (313 aa).

Position 111–114 (111–114 (SLLP)) interacts with (6S)-5,6,7,8-tetrahydrofolate.

It belongs to the Fmt family.

It catalyses the reaction L-methionyl-tRNA(fMet) + (6R)-10-formyltetrahydrofolate = N-formyl-L-methionyl-tRNA(fMet) + (6S)-5,6,7,8-tetrahydrofolate + H(+). Attaches a formyl group to the free amino group of methionyl-tRNA(fMet). The formyl group appears to play a dual role in the initiator identity of N-formylmethionyl-tRNA by promoting its recognition by IF2 and preventing the misappropriation of this tRNA by the elongation apparatus. In Mesoplasma florum (strain ATCC 33453 / NBRC 100688 / NCTC 11704 / L1) (Acholeplasma florum), this protein is Methionyl-tRNA formyltransferase.